The sequence spans 448 residues: Ribonuclease J (448 aa).

Residues histidine 81, histidine 83, aspartate 85, histidine 86, histidine 151, and aspartate 173 each coordinate Zn(2+). 383–387 provides a ligand contact to substrate; that stretch reads HVSGH. Histidine 409 provides a ligand contact to Zn(2+).

Belongs to the metallo-beta-lactamase superfamily. RNA-metabolizing metallo-beta-lactamase-like family. Archaeal RNase J subfamily. Forms homodimers on heating to 60 degrees Celsius which may be the active form. It depends on Zn(2+) as a cofactor.

It localises to the cytoplasm. Inhibited by imidazole. In terms of biological role, a 5'-3' exoribonuclease with a strong reference for 5'-monophosphorylated RNA and no endoribonuclease activty. Also has robust 5'-'3 nuclease activity on single-stranded DNA (exodeoxyribonuclease, exoDNase). May be involved in RNA degradation. This Methanocaldococcus jannaschii (strain ATCC 43067 / DSM 2661 / JAL-1 / JCM 10045 / NBRC 100440) (Methanococcus jannaschii) protein is Ribonuclease J.